The primary structure comprises 103 residues: Large ribosomal subunit protein uL23 (103 aa).

Belongs to the universal ribosomal protein uL23 family. As to quaternary structure, part of the 50S ribosomal subunit. Contacts protein L29, and trigger factor when it is bound to the ribosome.

One of the early assembly proteins it binds 23S rRNA. One of the proteins that surrounds the polypeptide exit tunnel on the outside of the ribosome. Forms the main docking site for trigger factor binding to the ribosome. The polypeptide is Large ribosomal subunit protein uL23 (Chlorobium chlorochromatii (strain CaD3)).